The sequence spans 87 residues: UPF0367 protein SynRCC307_0258 (87 aa).

Belongs to the UPF0367 family.

This chain is UPF0367 protein SynRCC307_0258, found in Synechococcus sp. (strain RCC307).